We begin with the raw amino-acid sequence, 297 residues long: Phosphoribosylaminoimidazole-succinocarboxamide synthase (297 aa).

Belongs to the SAICAR synthetase family.

The catalysed reaction is 5-amino-1-(5-phospho-D-ribosyl)imidazole-4-carboxylate + L-aspartate + ATP = (2S)-2-[5-amino-1-(5-phospho-beta-D-ribosyl)imidazole-4-carboxamido]succinate + ADP + phosphate + 2 H(+). Its pathway is purine metabolism; IMP biosynthesis via de novo pathway; 5-amino-1-(5-phospho-D-ribosyl)imidazole-4-carboxamide from 5-amino-1-(5-phospho-D-ribosyl)imidazole-4-carboxylate: step 1/2. The sequence is that of Phosphoribosylaminoimidazole-succinocarboxamide synthase from Mycobacterium ulcerans (strain Agy99).